The sequence spans 316 residues: Protoheme IX farnesyltransferase (316 aa).

Helical transmembrane passes span 32–52, 53–73, 93–113, 116–136, 152–172, 180–200, 221–241, 252–271, and 289–309; these read VMSL…GHIH, PVLG…SGAL, IPAG…LSGF, VILG…TIFF, NIVI…ACVT, TVLF…LALF, VTKH…VLPS, LVAA…VWRM, and IFYL…PVLV.

This sequence belongs to the UbiA prenyltransferase family. Protoheme IX farnesyltransferase subfamily.

Its subcellular location is the cell inner membrane. The catalysed reaction is heme b + (2E,6E)-farnesyl diphosphate + H2O = Fe(II)-heme o + diphosphate. Its pathway is porphyrin-containing compound metabolism; heme O biosynthesis; heme O from protoheme: step 1/1. Its function is as follows. Converts heme B (protoheme IX) to heme O by substitution of the vinyl group on carbon 2 of heme B porphyrin ring with a hydroxyethyl farnesyl side group. This is Protoheme IX farnesyltransferase from Rhizobium johnstonii (strain DSM 114642 / LMG 32736 / 3841) (Rhizobium leguminosarum bv. viciae).